Consider the following 292-residue polypeptide: 33 kDa chaperonin (292 aa).

Disulfide bonds link Cys238–Cys240 and Cys271–Cys274.

It belongs to the HSP33 family. Post-translationally, under oxidizing conditions two disulfide bonds are formed involving the reactive cysteines. Under reducing conditions zinc is bound to the reactive cysteines and the protein is inactive.

It is found in the cytoplasm. In terms of biological role, redox regulated molecular chaperone. Protects both thermally unfolding and oxidatively damaged proteins from irreversible aggregation. Plays an important role in the bacterial defense system toward oxidative stress. The polypeptide is 33 kDa chaperonin (Latilactobacillus sakei subsp. sakei (strain 23K) (Lactobacillus sakei subsp. sakei)).